We begin with the raw amino-acid sequence, 326 residues long: uncharacterized protein (326 aa).

28 to 35 contacts ATP; that stretch reads GPINSGKT.

The protein belongs to the archaeal ATPase family.

This is an uncharacterized protein from Pyrococcus abyssi (strain GE5 / Orsay).